We begin with the raw amino-acid sequence, 445 residues long: Xylose isomerase (445 aa).

Catalysis depends on residues His107 and Asp110. Glu238, Glu274, His277, Asp302, Asp313, Asp315, and Asp345 together coordinate Mg(2+).

This sequence belongs to the xylose isomerase family. In terms of assembly, homotetramer. The cofactor is Mg(2+).

The protein localises to the cytoplasm. The enzyme catalyses alpha-D-xylose = alpha-D-xylulofuranose. The protein is Xylose isomerase of Bacillus cereus (strain ATCC 10987 / NRS 248).